A 180-amino-acid polypeptide reads, in one-letter code: Large ribosomal subunit protein uL6 (180 aa).

This sequence belongs to the universal ribosomal protein uL6 family. As to quaternary structure, part of the 50S ribosomal subunit.

In terms of biological role, this protein binds to the 23S rRNA, and is important in its secondary structure. It is located near the subunit interface in the base of the L7/L12 stalk, and near the tRNA binding site of the peptidyltransferase center. The sequence is that of Large ribosomal subunit protein uL6 from Borreliella burgdorferi (strain ATCC 35210 / DSM 4680 / CIP 102532 / B31) (Borrelia burgdorferi).